The primary structure comprises 482 residues: tRNA sulfurtransferase (482 aa).

The 105-residue stretch at Asp-61–Arg-165 folds into the THUMP domain. ATP contacts are provided by residues Leu-183 to Ile-184, Lys-265, Gly-287, and Gln-296. Cys-344 and Cys-456 are oxidised to a cystine. The region spanning Leu-404–Pro-482 is the Rhodanese domain. Cys-456 acts as the Cysteine persulfide intermediate in catalysis.

This sequence belongs to the ThiI family.

It is found in the cytoplasm. It carries out the reaction [ThiI sulfur-carrier protein]-S-sulfanyl-L-cysteine + a uridine in tRNA + 2 reduced [2Fe-2S]-[ferredoxin] + ATP + H(+) = [ThiI sulfur-carrier protein]-L-cysteine + a 4-thiouridine in tRNA + 2 oxidized [2Fe-2S]-[ferredoxin] + AMP + diphosphate. The enzyme catalyses [ThiS sulfur-carrier protein]-C-terminal Gly-Gly-AMP + S-sulfanyl-L-cysteinyl-[cysteine desulfurase] + AH2 = [ThiS sulfur-carrier protein]-C-terminal-Gly-aminoethanethioate + L-cysteinyl-[cysteine desulfurase] + A + AMP + 2 H(+). It functions in the pathway cofactor biosynthesis; thiamine diphosphate biosynthesis. Its function is as follows. Catalyzes the ATP-dependent transfer of a sulfur to tRNA to produce 4-thiouridine in position 8 of tRNAs, which functions as a near-UV photosensor. Also catalyzes the transfer of sulfur to the sulfur carrier protein ThiS, forming ThiS-thiocarboxylate. This is a step in the synthesis of thiazole, in the thiamine biosynthesis pathway. The sulfur is donated as persulfide by IscS. The polypeptide is tRNA sulfurtransferase (Edwardsiella ictaluri (strain 93-146)).